Here is a 426-residue protein sequence, read N- to C-terminus: MPGAGSRGPSAGDGRLRLARLALVLLGWVSASAPSSSLPSSSTSPAAFLASGSAQPPPAERCPAACECSEAARTVKCVNRNLLEVPADLPPYVRNLFLTGNQMTVLPAGAFARQPPLADLAVLNLSGNHLKEVGAGAFEHLPGLRRLDLSHNPLTNLSAFTFAGSNVSVSTPSPLLELILNHIVPPEDQRQNGSFEGMVAFEGMVAAALRSGLALRGLHHLELASNHFLYLPRDLLDQLPSLKHLDLRNNSLVSLTYASFRNLTHLESLHLEDNALKVLHNSTLAEWQGLAHVRVFLDNNPWVCDCYMADMVSWLKETEVVPDKARLTCAFPEKMRNRGLLDLTSSDLDCDATLPQSLQTSYVFLGIVLALIGAIFLLVLYLNRKGIKKWMHNIRDACRDHMEGYHYRYEINADPRLTNLSSNSDV.

The N-terminal stretch at 1–31 is a signal peptide; sequence MPGAGSRGPSAGDGRLRLARLALVLLGWVSA. At 32-361 the chain is on the extracellular side; sequence SAPSSSLPSS…ATLPQSLQTS (330 aa). Residues 34 to 51 show a composition bias toward low complexity; sequence PSSSLPSSSTSPAAFLAS. The disordered stretch occupies residues 34-54; the sequence is PSSSLPSSSTSPAAFLASGSA. The LRRNT domain occupies 53–91; sequence SAQPPPAERCPAACECSEAARTVKCVNRNLLEVPADLPP. 2 disulfide bridges follow: Cys-62–Cys-68 and Cys-66–Cys-77. LRR repeat units follow at residues 92 to 113, 116 to 139, and 141 to 163; these read YVRNLFLTGNQMTVLPAGAFAR, PLADLAVLNLSGNHLKEVGAGAFE, and LPGLRRLDLSHNPLTNLSAFTFA. Residue Asn-124 is glycosylated (N-linked (GlcNAc...) asparagine). N-linked (GlcNAc...) asparagine glycosylation is present at Asn-166. LRR repeat units follow at residues 172–210, 215–238, 239–261, and 262–281; these read PSPLLELILNHIVPPEDQRQNGSFEGMVAFEGMVAAALR, LRGLHHLELASNHFLYLPRDLLDQ, LPSLKHLDLRNNSLVSLTYASFR, and NLTHLESLHLEDNALKVLHN. A glycan (N-linked (GlcNAc...) asparagine) is linked at Asn-281. Residues 289–352 form the LRRCT domain; sequence GLAHVRVFLD…LTSSDLDCDA (64 aa). Disulfide bonds link Cys-304/Cys-329 and Cys-306/Cys-350. A helical membrane pass occupies residues 362 to 382; sequence YVFLGIVLALIGAIFLLVLYL. Topologically, residues 383-426 are cytoplasmic; it reads NRKGIKKWMHNIRDACRDHMEGYHYRYEINADPRLTNLSSNSDV. At Ser-424 the chain carries Phosphoserine.

Post-translationally, highly glycosylated.

It localises to the cell membrane. Its function is as follows. May function as an inhibitor of Wnt/beta-catenin signaling by indirectly interacting with LRP6 and blocking Wnt3a-dependent LRP6 internalization. This Rattus norvegicus (Rat) protein is Trophoblast glycoprotein (Tpbg).